Reading from the N-terminus, the 322-residue chain is Phosphatidylserine decarboxylase proenzyme (322 aa).

Catalysis depends on charge relay system; for autoendoproteolytic cleavage activity residues aspartate 90, histidine 147, and serine 254. Serine 254 serves as the catalytic Schiff-base intermediate with substrate; via pyruvic acid; for decarboxylase activity. Pyruvic acid (Ser); by autocatalysis is present on serine 254. The tract at residues 290–322 (FVTPDSEPAPLPAEEIEAEHDASPLVDDKKDQV) is disordered. The span at 308 to 322 (EHDASPLVDDKKDQV) shows a compositional bias: basic and acidic residues.

Belongs to the phosphatidylserine decarboxylase family. PSD-B subfamily. Prokaryotic type I sub-subfamily. As to quaternary structure, heterodimer of a large membrane-associated beta subunit and a small pyruvoyl-containing alpha subunit. The cofactor is pyruvate. Is synthesized initially as an inactive proenzyme. Formation of the active enzyme involves a self-maturation process in which the active site pyruvoyl group is generated from an internal serine residue via an autocatalytic post-translational modification. Two non-identical subunits are generated from the proenzyme in this reaction, and the pyruvate is formed at the N-terminus of the alpha chain, which is derived from the carboxyl end of the proenzyme. The autoendoproteolytic cleavage occurs by a canonical serine protease mechanism, in which the side chain hydroxyl group of the serine supplies its oxygen atom to form the C-terminus of the beta chain, while the remainder of the serine residue undergoes an oxidative deamination to produce ammonia and the pyruvoyl prosthetic group on the alpha chain. During this reaction, the Ser that is part of the protease active site of the proenzyme becomes the pyruvoyl prosthetic group, which constitutes an essential element of the active site of the mature decarboxylase.

Its subcellular location is the cell membrane. The catalysed reaction is a 1,2-diacyl-sn-glycero-3-phospho-L-serine + H(+) = a 1,2-diacyl-sn-glycero-3-phosphoethanolamine + CO2. It participates in phospholipid metabolism; phosphatidylethanolamine biosynthesis; phosphatidylethanolamine from CDP-diacylglycerol: step 2/2. Its function is as follows. Catalyzes the formation of phosphatidylethanolamine (PtdEtn) from phosphatidylserine (PtdSer). The polypeptide is Phosphatidylserine decarboxylase proenzyme (Escherichia fergusonii (strain ATCC 35469 / DSM 13698 / CCUG 18766 / IAM 14443 / JCM 21226 / LMG 7866 / NBRC 102419 / NCTC 12128 / CDC 0568-73)).